The primary structure comprises 457 residues: Multidrug resistance protein MdtK (457 aa).

The next 12 helical transmembrane spans lie at 11–31 (LLALAIPVILAQIAQTAMGFV), 53–73 (IWLPAILFGHGLLLALTPVIA), 93–113 (WLAGFVSVLIMLVLWNAGYII), 127–147 (AVGYLRALLWGAPGYLFFQVA), 160–180 (GMVMGFIGLLVNIPVNYIFIY), 189–209 (GGVGCGVATAAVYWVMFLAMV), 243–263 (LPIALALFFEVTLFAVVALLV), 276–296 (IALNFSSLMFVLPMSLAAAVT), 314–334 (AARTGLMVGVCMATLTAIFTV), 350–370 (VVTLAAHLMLLAAVYQISDSI), 387–407 (IFYITFTAYWVLGLPSGYILA), and 418–438 (PAGFWIGFIIGLTSAAIMMML).

The protein belongs to the multi antimicrobial extrusion (MATE) (TC 2.A.66.1) family. MdtK subfamily.

It localises to the cell inner membrane. Its function is as follows. Multidrug efflux pump that functions probably as a Na(+)/drug antiporter. The protein is Multidrug resistance protein MdtK of Escherichia coli O9:H4 (strain HS).